Consider the following 276-residue polypeptide: 3-methyl-2-oxobutanoate hydroxymethyltransferase (276 aa).

Mg(2+)-binding residues include aspartate 44 and aspartate 83. 3-methyl-2-oxobutanoate contacts are provided by residues 44-45, aspartate 83, and lysine 113; that span reads DS. Glutamate 115 contributes to the Mg(2+) binding site. Glutamate 182 functions as the Proton acceptor in the catalytic mechanism.

Belongs to the PanB family. Homodecamer; pentamer of dimers. Requires Mg(2+) as cofactor.

It localises to the cytoplasm. The enzyme catalyses 3-methyl-2-oxobutanoate + (6R)-5,10-methylene-5,6,7,8-tetrahydrofolate + H2O = 2-dehydropantoate + (6S)-5,6,7,8-tetrahydrofolate. The protein operates within cofactor biosynthesis; (R)-pantothenate biosynthesis; (R)-pantoate from 3-methyl-2-oxobutanoate: step 1/2. Catalyzes the reversible reaction in which hydroxymethyl group from 5,10-methylenetetrahydrofolate is transferred onto alpha-ketoisovalerate to form ketopantoate. In Clostridium acetobutylicum (strain ATCC 824 / DSM 792 / JCM 1419 / IAM 19013 / LMG 5710 / NBRC 13948 / NRRL B-527 / VKM B-1787 / 2291 / W), this protein is 3-methyl-2-oxobutanoate hydroxymethyltransferase.